Consider the following 337-residue polypeptide: Phenylalanine--tRNA ligase alpha subunit (337 aa).

A Mg(2+)-binding site is contributed by glutamate 252.

This sequence belongs to the class-II aminoacyl-tRNA synthetase family. Phe-tRNA synthetase alpha subunit type 1 subfamily. As to quaternary structure, tetramer of two alpha and two beta subunits. Mg(2+) serves as cofactor.

It localises to the cytoplasm. The enzyme catalyses tRNA(Phe) + L-phenylalanine + ATP = L-phenylalanyl-tRNA(Phe) + AMP + diphosphate + H(+). The polypeptide is Phenylalanine--tRNA ligase alpha subunit (Francisella tularensis subsp. novicida (strain U112)).